The chain runs to 221 residues: uncharacterized protein (221 aa).

Positions 20-63 (DFDRAMLDFQAMFPSLSNSHIEYVLRKYDGDVSATINELLYDNT) constitute a CUE domain. The segment at 131–194 (EEKKKKSCSD…GPYIGEGEVK (64 aa)) is disordered. Residues 156-166 (KNSKNSKISVN) are compositionally biased toward low complexity. Residues 169-183 (KKLEPRRRSDEDRVP) show a composition bias toward basic and acidic residues.

This is an uncharacterized protein from Caenorhabditis elegans.